A 434-amino-acid chain; its full sequence is Putative polysaccharide biosynthesis protein with aminopeptidase-like domain (434 aa).

Aminopeptidase-like regions lie at residues 1 to 55 (MEEI…IHEV) and 57 to 355 (SGTK…IENN). The interval 56 to 164 (KSGTKVFDWT…VVIDSSLEDG (109 aa)) is insert. 3 residues coordinate Zn(2+): His-189, Asp-195, and His-324. Positions 356–434 (RTYLNLNPKC…LYRVELLKLV (79 aa)) are permutated winged helix-turn-helix.

Belongs to the UPF0770 family. Homotrimer. It depends on Zn(2+) as a cofactor.

Functionally, the genomic context suggests a role in the biosynthesis of modified polysaccharides; this association with genes involved in carbohydrate metabolism is observed in several phylogenetically distinct taxa. Is not expected to have peptidase activity despite low similarity to aminopeptidases. The protein is Putative polysaccharide biosynthesis protein with aminopeptidase-like domain of Clostridium acetobutylicum (strain ATCC 824 / DSM 792 / JCM 1419 / IAM 19013 / LMG 5710 / NBRC 13948 / NRRL B-527 / VKM B-1787 / 2291 / W).